Reading from the N-terminus, the 156-residue chain is Cell division protein SepF (156 aa).

The segment covering 20–36 (AQYGYEKEQTDMKKQQD) has biased composition (basic and acidic residues). Residues 20–50 (AQYGYEKEQTDMKKQQDPPEQQDVTFPKAQP) are disordered.

Belongs to the SepF family. As to quaternary structure, homodimer. Interacts with FtsZ.

The protein resides in the cytoplasm. In terms of biological role, cell division protein that is part of the divisome complex and is recruited early to the Z-ring. Probably stimulates Z-ring formation, perhaps through the cross-linking of FtsZ protofilaments. Its function overlaps with FtsA. This chain is Cell division protein SepF, found in Bacillus cereus (strain G9842).